The sequence spans 304 residues: E3 ubiquitin-protein ligase BOI (304 aa).

Residues 178–214 form a WRD domain region; that stretch reads LQERVKSLYVENQIWRDIAQTNEANANTLRTNLDQVL. Residues 197 to 220 are a coiled coil; the sequence is QTNEANANTLRTNLDQVLAQLETF. Residues 254 to 291 form an RING-type zinc finger; that stretch reads CKRCGEREASVLVLPCRHLCLCTVCGGSALLRTCPVCD.

As to quaternary structure, interacts with MYB108/BOS1 and the DELLA proteins GAI, RGA, RGL1, RGL2 and RGL3. Expressed in leaves, siliques, roots, flowering tissues and stigma tips.

It localises to the nucleus. The catalysed reaction is S-ubiquitinyl-[E2 ubiquitin-conjugating enzyme]-L-cysteine + [acceptor protein]-L-lysine = [E2 ubiquitin-conjugating enzyme]-L-cysteine + N(6)-ubiquitinyl-[acceptor protein]-L-lysine.. It participates in protein degradation; proteasomal ubiquitin-dependent pathway. E3 ubiquitin-protein ligase involved in the regulation of pathogen and abiotic stress responses by facilitating degradation of MYB108/BOI. Attenuates cell death by preventing caspase activation. Has no effect on the stability of the DELLA proteins. Not regulated by MYB108/BOI. The chain is E3 ubiquitin-protein ligase BOI (BOI) from Arabidopsis thaliana (Mouse-ear cress).